A 242-amino-acid chain; its full sequence is uncharacterized protein (242 aa).

In terms of domain architecture, S4 RNA-binding spans 2-62; sequence EKAYKLLSVQ…VEKPSVIFED (61 aa). Asp-93 is a catalytic residue.

This sequence belongs to the pseudouridine synthase RluA family.

The enzyme catalyses a uridine in RNA = a pseudouridine in RNA. This is an uncharacterized protein from Helicobacter pylori (strain J99 / ATCC 700824) (Campylobacter pylori J99).